Here is a 223-residue protein sequence, read N- to C-terminus: 2-C-methyl-D-erythritol 4-phosphate cytidylyltransferase (223 aa).

This sequence belongs to the IspD/TarI cytidylyltransferase family. IspD subfamily.

It carries out the reaction 2-C-methyl-D-erythritol 4-phosphate + CTP + H(+) = 4-CDP-2-C-methyl-D-erythritol + diphosphate. The protein operates within isoprenoid biosynthesis; isopentenyl diphosphate biosynthesis via DXP pathway; isopentenyl diphosphate from 1-deoxy-D-xylulose 5-phosphate: step 2/6. In terms of biological role, catalyzes the formation of 4-diphosphocytidyl-2-C-methyl-D-erythritol from CTP and 2-C-methyl-D-erythritol 4-phosphate (MEP). The sequence is that of 2-C-methyl-D-erythritol 4-phosphate cytidylyltransferase from Prochlorococcus marinus (strain MIT 9215).